The following is a 348-amino-acid chain: Alcohol dehydrogenase 1 (348 aa).

An N-acetylserine modification is found at S2. C44 serves as a coordination point for Zn(2+). NAD(+) contacts are provided by H45, T46, and H49. Zn(2+) contacts are provided by H67, E68, C98, C101, C104, C112, and C154. 5 residues coordinate NAD(+): G181, G182, L183, D202, and K207. S213 bears the Phosphoserine mark. Residue F222 coordinates NAD(+). T223 is subject to Phosphothreonine. Glycyl lysine isopeptide (Lys-Gly) (interchain with G-Cter in ubiquitin) cross-links involve residues K226 and K234. Residues V269 and M271 each coordinate NAD(+). The residue at position 279 (S279) is a Phosphoserine. A Glycyl lysine isopeptide (Lys-Gly) (interchain with G-Cter in ubiquitin) cross-link involves residue K287. The NAD(+) site is built by S294 and V296. Phosphoserine is present on S316. A Glycyl lysine isopeptide (Lys-Gly) (interchain with G-Cter in ubiquitin) cross-link involves residue K319. An NAD(+)-binding site is contributed by R341.

Belongs to the zinc-containing alcohol dehydrogenase family. As to quaternary structure, homotetramer. It depends on Zn(2+) as a cofactor.

The protein resides in the cytoplasm. It carries out the reaction a primary alcohol + NAD(+) = an aldehyde + NADH + H(+). The enzyme catalyses a secondary alcohol + NAD(+) = a ketone + NADH + H(+). It catalyses the reaction ethanol + NAD(+) = acetaldehyde + NADH + H(+). The catalysed reaction is allyl alcohol + NADP(+) = acrolein + NADPH + H(+). It carries out the reaction 1-propanol + NAD(+) = propanal + NADH + H(+). The enzyme catalyses butan-1-ol + NAD(+) = butanal + NADH + H(+). It catalyses the reaction hexan-1-ol + NAD(+) = hexanal + NADH + H(+). The catalysed reaction is (R)-lactaldehyde + NAD(+) = methylglyoxal + NADH + H(+). It carries out the reaction octan-1-ol + NAD(+) = octanal + NADH + H(+). The enzyme catalyses butan-2-ol + NAD(+) = butan-2-one + NADH + H(+). It catalyses the reaction propan-2-ol + NAD(+) = acetone + NADH + H(+). The catalysed reaction is isobutanol + NAD(+) = 2-methylpropanal + NADH + H(+). In terms of biological role, preferentially fermentative isozyme that reduces acetaldehyde to ethanol during the fermentation of glucose. Major enzyme required for the conversion of acetaldehyde to ethanol. Plays a key role in the carbohydrate metabolism through the regeneration of NAD(+) from glycolytic NADH. In the reverse reaction, preferentially catalyzes the conversion of primary unbranched alcohols to their corresponding aldehydes. Also shows activity toward secondary alcohols. Most active with ethanol, and its activity decreases as the size of the alcohol is increased. This is Alcohol dehydrogenase 1 (ADH1) from Saccharomyces cerevisiae (strain ATCC 204508 / S288c) (Baker's yeast).